Consider the following 385-residue polypeptide: Probable tRNA sulfurtransferase (385 aa).

In terms of domain architecture, THUMP spans 57 to 160; it reads DGVIERVKKV…RGNAYVFTDK (104 aa). ATP-binding positions include 180-181, 205-206, arginine 262, glycine 284, and glutamine 293; these read ML and YY.

Belongs to the ThiI family.

It localises to the cytoplasm. The enzyme catalyses [ThiI sulfur-carrier protein]-S-sulfanyl-L-cysteine + a uridine in tRNA + 2 reduced [2Fe-2S]-[ferredoxin] + ATP + H(+) = [ThiI sulfur-carrier protein]-L-cysteine + a 4-thiouridine in tRNA + 2 oxidized [2Fe-2S]-[ferredoxin] + AMP + diphosphate. The catalysed reaction is [ThiS sulfur-carrier protein]-C-terminal Gly-Gly-AMP + S-sulfanyl-L-cysteinyl-[cysteine desulfurase] + AH2 = [ThiS sulfur-carrier protein]-C-terminal-Gly-aminoethanethioate + L-cysteinyl-[cysteine desulfurase] + A + AMP + 2 H(+). The protein operates within cofactor biosynthesis; thiamine diphosphate biosynthesis. Catalyzes the ATP-dependent transfer of a sulfur to tRNA to produce 4-thiouridine in position 8 of tRNAs, which functions as a near-UV photosensor. Also catalyzes the transfer of sulfur to the sulfur carrier protein ThiS, forming ThiS-thiocarboxylate. This is a step in the synthesis of thiazole, in the thiamine biosynthesis pathway. The sulfur is donated as persulfide by IscS. This Clostridium perfringens (strain ATCC 13124 / DSM 756 / JCM 1290 / NCIMB 6125 / NCTC 8237 / Type A) protein is Probable tRNA sulfurtransferase.